A 218-amino-acid chain; its full sequence is Phosphoglycolate phosphatase (218 aa).

Asp7 functions as the Nucleophile in the catalytic mechanism. Residues Asp7, Asp9, and Asp167 each coordinate Mg(2+).

The protein belongs to the HAD-like hydrolase superfamily. CbbY/CbbZ/Gph/YieH family. Mg(2+) is required as a cofactor.

The enzyme catalyses 2-phosphoglycolate + H2O = glycolate + phosphate. The protein operates within organic acid metabolism; glycolate biosynthesis; glycolate from 2-phosphoglycolate: step 1/1. In terms of biological role, specifically catalyzes the dephosphorylation of 2-phosphoglycolate. Is involved in the dissimilation of the intracellular 2-phosphoglycolate formed during the DNA repair of 3'-phosphoglycolate ends, a major class of DNA lesions induced by oxidative stress. The chain is Phosphoglycolate phosphatase from Cereibacter sphaeroides (strain ATCC 17029 / ATH 2.4.9) (Rhodobacter sphaeroides).